A 428-amino-acid polypeptide reads, in one-letter code: Spliceosome RNA helicase DDX39B (428 aa).

Residues 1–19 (MAENDVDNELLDYEDDEVE) are compositionally biased toward acidic residues. The tract at residues 1–31 (MAENDVDNELLDYEDDEVETAAGGDGAEAPA) is disordered. At Ala-2 the chain carries N-acetylalanine. An N6-acetyllysine; alternate modification is found at Lys-36. Lys-36 is covalently cross-linked (Glycyl lysine isopeptide (Lys-Gly) (interchain with G-Cter in SUMO2); alternate). Residues Ser-38 and Ser-41 each carry the phosphoserine modification. Positions 45–73 (SGFRDFLLKPELLRAIVDCGFEHPSEVQH) match the Q motif motif. The region spanning 76 to 249 (IPQAILGMDV…RKFMQDPMEI (174 aa)) is the Helicase ATP-binding domain. ATP is bound at residue 89 to 96 (AKSGMGKT). Thr-172 carries the post-translational modification Phosphothreonine. The short motif at 196-199 (DECD) is the DECD box element. A Helicase C-terminal domain is found at 261-422 (GLQQYYVKLK…ELPDEIDISS (162 aa)).

Belongs to the DEAD box helicase family. DECD subfamily. In terms of assembly, homodimer, and heterodimer with DDX39A. DDX39B interacts with the THO subcomplex to form the THO-DDX39B complex which multimerizes into a 28-subunit tetrameric assembly. Component of the transcription/export (TREX) complex at least composed of ALYREF/THOC4, DDX39B, SARNP/CIP29, CHTOP and the THO subcomplex; in the complex interacts with THOC2. THOC1-THOC2-THOC3-DDX39B subcomplex is sufficient for the interaction with export factor NXF1-NXT1. TREX seems to have a dynamic structure involving ATP-dependent remodeling. Within the TREX complex bridges ALYREF/THOC4 and the THO subcomplex, and, in a ATP-dependent manner, ALYREF/THOC4 and SARNP/CIP29. Component of the spliceosome. Interacts directly with U2AF2. Interacts with RBM8A, RNPS1 and SRRM1, FYTTD1/UIF, THOC1, MX1 and POLDIP3. Interacts with LUZP4. Interacts with SARNP/CIP29 (via the C-terminal domain); the interaction is direct and facilitates RNA binding of DDX39B. (Microbial infection) Interacts with human cytomegalovirus/HHV-5 protein UL69.

The protein resides in the nucleus. It is found in the nucleus speckle. The protein localises to the cytoplasm. The enzyme catalyses ATP + H2O = ADP + phosphate + H(+). Its function is as follows. Involved in nuclear export of spliced and unspliced mRNA. Component of the TREX complex which is thought to couple mRNA transcription, processing and nuclear export, and specifically associates with spliced mRNA and not with unspliced pre-mRNA. The TREX complex is recruited to spliced mRNAs by a transcription-independent mechanism, binds to mRNA upstream of the exon-junction complex (EJC) and is recruited in a splicing- and cap-dependent manner to a region near the 5' end of the mRNA where it functions in mRNA export to the cytoplasm via the TAP/NXF1 pathway. The THOC1-THOC2-THOC3 core complex alone is sufficient to promote ATPase activity of DDX39B; in the complex THOC2 is the only component that directly interacts with DDX39B. Associates with SARNP/CIP29, which facilitates RNA binding of DDX39B and likely plays a role in mRNA export. May undergo several rounds of ATP hydrolysis during assembly of TREX to drive subsequent loading of components such as ALYREF/THOC4 and CHTOP onto mRNA. Also associates with pre-mRNA independent of ALYREF/THOC4. Involved in the nuclear export of intronless mRNA; the ATP-bound form is proposed to recruit export adapter ALYREF/THOC4 to intronless mRNA; its ATPase activity is cooperatively stimulated by RNA and ALYREF/THOC4 and ATP hydrolysis is thought to trigger the dissociation from RNA to allow the association of ALYREF/THOC4 and the NXF1-NXT1 heterodimer. Involved in transcription elongation and genome stability. Splice factor that is required for the first ATP-dependent step in spliceosome assembly and for the interaction of U2 snRNP with the branchpoint. Has both RNA-stimulated ATP binding/hydrolysis activity and ATP-dependent RNA unwinding activity. Even with the stimulation of RNA, the ATPase activity is weak. Can only hydrolyze ATP but not other NTPs. The RNA stimulation of ATPase activity does not have a strong preference for the sequence and length of the RNA. However, ssRNA stimulates the ATPase activity much more strongly than dsRNA. Can unwind 5' or 3' overhangs or blunt end RNA duplexes in vitro. The ATPase and helicase activities are not influenced by U2AF2; the effect of ALYREF/THOC4 is reported conflictingly with [PubMed:23299939] reporting a stimulatory effect. Functionally, (Microbial infection) The TREX complex is essential for the export of Kaposi's sarcoma-associated herpesvirus (KSHV) intronless mRNAs and infectious virus production. The protein is Spliceosome RNA helicase DDX39B of Homo sapiens (Human).